The primary structure comprises 674 residues: Sodium/myo-inositol cotransporter 2 (674 aa).

The Extracellular portion of the chain corresponds to methionine 1–alanine 27. A helical membrane pass occupies residues aspartate 28–valine 48. Over lysine 49–lysine 56 the chain is Cytoplasmic. Residues glycine 57–serine 77 form a helical membrane-spanning segment. The Extracellular segment spans residues asparagine 78–glutamate 102. The helical transmembrane segment at phenylalanine 103–glycine 123 threads the bilayer. Topologically, residues glutamine 124–arginine 140 are cytoplasmic. The helical transmembrane segment at isoleucine 141–aspartate 161 threads the bilayer. The Extracellular segment spans residues methionine 162–alanine 180. Residues isoleucine 181 to isoleucine 201 traverse the membrane as a helical segment. The Cytoplasmic portion of the chain corresponds to tyrosine 202 to threonine 208. Residues leucine 209–methionine 229 traverse the membrane as a helical segment. The Extracellular portion of the chain corresponds to glutamate 230–proline 272. The helical transmembrane segment at glycine 273–valine 293 threads the bilayer. The Cytoplasmic segment spans residues glutamine 294–glycine 308. The helical transmembrane segment at serine 309–valine 329 threads the bilayer. At serine 330–arginine 374 the chain is on the extracellular side. A helical transmembrane segment spans residues glycine 375–serine 397. The Cytoplasmic portion of the chain corresponds to threonine 398–methionine 418. Residues isoleucine 419 to valine 439 form a helical membrane-spanning segment. The Extracellular segment spans residues glutamine 440–glutamine 446. A helical transmembrane segment spans residues leucine 447–isoleucine 467. The Cytoplasmic portion of the chain corresponds to methionine 468–glycine 479. The helical transmembrane segment at alanine 480 to isoleucine 500 threads the bilayer. Residues tyrosine 501–aspartate 518 are Extracellular-facing. The chain crosses the membrane as a helical span at residues valine 519 to valine 539. The Cytoplasmic segment spans residues serine 540–threonine 653. The chain crosses the membrane as a helical span at residues leucine 654–alanine 674.

It belongs to the sodium:solute symporter (SSF) (TC 2.A.21) family.

Its subcellular location is the membrane. It is found in the apical cell membrane. The catalysed reaction is myo-inositol(out) + 2 Na(+)(out) = myo-inositol(in) + 2 Na(+)(in). It carries out the reaction 1D-chiro-inositol(out) + 2 Na(+)(out) = 1D-chiro-inositol(in) + 2 Na(+)(in). The enzyme catalyses D-glucose(out) + 2 Na(+)(out) = D-glucose(in) + 2 Na(+)(in). It catalyses the reaction D-xylose(out) + 2 Na(+)(out) = D-xylose(in) + 2 Na(+)(in). MI transport activity inhibited by D-chiro-inositol (DCI), phlorizin (Pz) and sodium (Na(+)). Insulin increases D-chiro-inositol uptake. Its function is as follows. Involved in the sodium-dependent cotransport of myo-inositol (MI) with a Na(+):MI stoichiometry of 2:1. Exclusively responsible for apical MI transport and absorption in intestine. Can also transport D-chiro-inositol (DCI) but not L-fucose. Exhibits stereospecific cotransport of both D-glucose and D-xylose. May induce apoptosis through the TNF-alpha, PDCD1 pathway. May play a role in the regulation of MI concentration in serum, involving reabsorption in at least the proximal tubule of the kidney. This is Sodium/myo-inositol cotransporter 2 from Sus scrofa (Pig).